We begin with the raw amino-acid sequence, 532 residues long: Bifunctional purine biosynthesis protein PurH (532 aa).

Residues 1–149 (MTDPAPLTRA…KNHGAVTVLT (149 aa)) enclose the MGS-like domain.

Belongs to the PurH family.

The enzyme catalyses (6R)-10-formyltetrahydrofolate + 5-amino-1-(5-phospho-beta-D-ribosyl)imidazole-4-carboxamide = 5-formamido-1-(5-phospho-D-ribosyl)imidazole-4-carboxamide + (6S)-5,6,7,8-tetrahydrofolate. It carries out the reaction IMP + H2O = 5-formamido-1-(5-phospho-D-ribosyl)imidazole-4-carboxamide. Its pathway is purine metabolism; IMP biosynthesis via de novo pathway; 5-formamido-1-(5-phospho-D-ribosyl)imidazole-4-carboxamide from 5-amino-1-(5-phospho-D-ribosyl)imidazole-4-carboxamide (10-formyl THF route): step 1/1. It participates in purine metabolism; IMP biosynthesis via de novo pathway; IMP from 5-formamido-1-(5-phospho-D-ribosyl)imidazole-4-carboxamide: step 1/1. This Jannaschia sp. (strain CCS1) protein is Bifunctional purine biosynthesis protein PurH.